The primary structure comprises 120 residues: Large ribosomal subunit protein uL18 (120 aa).

Belongs to the universal ribosomal protein uL18 family. Part of the 50S ribosomal subunit; part of the 5S rRNA/L5/L18/L25 subcomplex. Contacts the 5S and 23S rRNAs.

In terms of biological role, this is one of the proteins that bind and probably mediate the attachment of the 5S RNA into the large ribosomal subunit, where it forms part of the central protuberance. This is Large ribosomal subunit protein uL18 from Chloroflexus aurantiacus (strain ATCC 29364 / DSM 637 / Y-400-fl).